Reading from the N-terminus, the 457-residue chain is ATP synthase subunit beta (457 aa).

Position 147–154 (147–154 (GGAGVGKT)) interacts with ATP.

This sequence belongs to the ATPase alpha/beta chains family. F-type ATPases have 2 components, CF(1) - the catalytic core - and CF(0) - the membrane proton channel. CF(1) has five subunits: alpha(3), beta(3), gamma(1), delta(1), epsilon(1). CF(0) has three main subunits: a(1), b(2) and c(9-12). The alpha and beta chains form an alternating ring which encloses part of the gamma chain. CF(1) is attached to CF(0) by a central stalk formed by the gamma and epsilon chains, while a peripheral stalk is formed by the delta and b chains.

The protein localises to the cell inner membrane. It catalyses the reaction ATP + H2O + 4 H(+)(in) = ADP + phosphate + 5 H(+)(out). In terms of biological role, produces ATP from ADP in the presence of a proton gradient across the membrane. The catalytic sites are hosted primarily by the beta subunits. The polypeptide is ATP synthase subunit beta (Glaesserella parasuis serovar 5 (strain SH0165) (Haemophilus parasuis)).